The primary structure comprises 491 residues: Aspartyl/glutamyl-tRNA(Asn/Gln) amidotransferase subunit B (491 aa).

The protein belongs to the GatB/GatE family. GatB subfamily. As to quaternary structure, heterotrimer of A, B and C subunits.

The catalysed reaction is L-glutamyl-tRNA(Gln) + L-glutamine + ATP + H2O = L-glutaminyl-tRNA(Gln) + L-glutamate + ADP + phosphate + H(+). It carries out the reaction L-aspartyl-tRNA(Asn) + L-glutamine + ATP + H2O = L-asparaginyl-tRNA(Asn) + L-glutamate + ADP + phosphate + 2 H(+). Functionally, allows the formation of correctly charged Asn-tRNA(Asn) or Gln-tRNA(Gln) through the transamidation of misacylated Asp-tRNA(Asn) or Glu-tRNA(Gln) in organisms which lack either or both of asparaginyl-tRNA or glutaminyl-tRNA synthetases. The reaction takes place in the presence of glutamine and ATP through an activated phospho-Asp-tRNA(Asn) or phospho-Glu-tRNA(Gln). The sequence is that of Aspartyl/glutamyl-tRNA(Asn/Gln) amidotransferase subunit B from Burkholderia multivorans (strain ATCC 17616 / 249).